Consider the following 261-residue polypeptide: Small ribosomal subunit protein uS2 (261 aa).

This sequence belongs to the universal ribosomal protein uS2 family.

This chain is Small ribosomal subunit protein uS2, found in Rhodospirillum centenum (strain ATCC 51521 / SW).